Reading from the N-terminus, the 137-residue chain is Cellular retinoic acid-binding protein 1 (137 aa).

The Nuclear localization signal motif lies at 21-31 (RALGVNAMLRK). 132 to 134 (RIY) is an all-trans-retinoate binding site.

This sequence belongs to the calycin superfamily. Fatty-acid binding protein (FABP) family.

It is found in the cytoplasm. In terms of biological role, cytosolic CRABPs may regulate the access of retinoic acid to the nuclear retinoic acid receptors. The sequence is that of Cellular retinoic acid-binding protein 1 (CRABP1) from Pelodiscus sinensis (Chinese softshell turtle).